Here is a 351-residue protein sequence, read N- to C-terminus: Phosphate acyltransferase (351 aa).

The protein belongs to the PlsX family. In terms of assembly, homodimer. Probably interacts with PlsY.

It is found in the cytoplasm. The catalysed reaction is a fatty acyl-[ACP] + phosphate = an acyl phosphate + holo-[ACP]. The protein operates within lipid metabolism; phospholipid metabolism. In terms of biological role, catalyzes the reversible formation of acyl-phosphate (acyl-PO(4)) from acyl-[acyl-carrier-protein] (acyl-ACP). This enzyme utilizes acyl-ACP as fatty acyl donor, but not acyl-CoA. This is Phosphate acyltransferase from Verminephrobacter eiseniae (strain EF01-2).